Here is a 225-residue protein sequence, read N- to C-terminus: Tryptophan synthase beta chain (225 aa).

Belongs to the TrpB family. In terms of assembly, tetramer of two alpha and two beta chains. Pyridoxal 5'-phosphate is required as a cofactor.

It catalyses the reaction (1S,2R)-1-C-(indol-3-yl)glycerol 3-phosphate + L-serine = D-glyceraldehyde 3-phosphate + L-tryptophan + H2O. It participates in amino-acid biosynthesis; L-tryptophan biosynthesis; L-tryptophan from chorismate: step 5/5. The beta subunit is responsible for the synthesis of L-tryptophan from indole and L-serine. In Buchnera aphidicola subsp. Rhopalosiphum padi, this protein is Tryptophan synthase beta chain (trpB).